Here is a 188-residue protein sequence, read N- to C-terminus: Elongation factor P (188 aa).

Belongs to the elongation factor P family.

It localises to the cytoplasm. The protein operates within protein biosynthesis; polypeptide chain elongation. Its function is as follows. Involved in peptide bond synthesis. Stimulates efficient translation and peptide-bond synthesis on native or reconstituted 70S ribosomes in vitro. Probably functions indirectly by altering the affinity of the ribosome for aminoacyl-tRNA, thus increasing their reactivity as acceptors for peptidyl transferase. The protein is Elongation factor P of Aeromonas hydrophila subsp. hydrophila (strain ATCC 7966 / DSM 30187 / BCRC 13018 / CCUG 14551 / JCM 1027 / KCTC 2358 / NCIMB 9240 / NCTC 8049).